A 305-amino-acid polypeptide reads, in one-letter code: NDP-polyphosphate phosphotransferase 1 (305 aa).

It belongs to the polyphosphate kinase 2 (PPK2) family. Class I subfamily.

It catalyses the reaction [phosphate](n) + ATP = [phosphate](n+1) + ADP. It carries out the reaction [phosphate](n) + CTP = [phosphate](n+1) + CDP. The enzyme catalyses [phosphate](n) + GTP = [phosphate](n+1) + GDP. The catalysed reaction is [phosphate](n) + UTP = [phosphate](n+1) + UDP. With respect to regulation, shows little dependence on metals. Uses inorganic polyphosphate (polyP) as a donor to convert NDP to NTP. PolyP hydrolysis is slightly faster with GDP, but it can also use ADP, CDP and UDP. The sequence is that of NDP-polyphosphate phosphotransferase 1 from Ruegeria pomeroyi (strain ATCC 700808 / DSM 15171 / DSS-3) (Silicibacter pomeroyi).